Consider the following 287-residue polypeptide: Formamidopyrimidine-DNA glycosylase (287 aa).

Proline 2 functions as the Schiff-base intermediate with DNA in the catalytic mechanism. The Proton donor role is filled by glutamate 3. The active-site Proton donor; for beta-elimination activity is lysine 61. The DNA site is built by histidine 95, arginine 115, and arginine 157. The FPG-type zinc-finger motif lies at 243–277 (NVYGRADQPCRRCGEPVRREAFMNRSSFSCPRCQP). Arginine 267 (proton donor; for delta-elimination activity) is an active-site residue.

Belongs to the FPG family. As to quaternary structure, monomer. Requires Zn(2+) as cofactor.

The catalysed reaction is Hydrolysis of DNA containing ring-opened 7-methylguanine residues, releasing 2,6-diamino-4-hydroxy-5-(N-methyl)formamidopyrimidine.. It carries out the reaction 2'-deoxyribonucleotide-(2'-deoxyribose 5'-phosphate)-2'-deoxyribonucleotide-DNA = a 3'-end 2'-deoxyribonucleotide-(2,3-dehydro-2,3-deoxyribose 5'-phosphate)-DNA + a 5'-end 5'-phospho-2'-deoxyribonucleoside-DNA + H(+). Functionally, involved in base excision repair of DNA damaged by oxidation or by mutagenic agents. Acts as a DNA glycosylase that recognizes and removes damaged bases. Has a preference for oxidized purines, such as 7,8-dihydro-8-oxoguanine (8-oxoG). Has AP (apurinic/apyrimidinic) lyase activity and introduces nicks in the DNA strand. Cleaves the DNA backbone by beta-delta elimination to generate a single-strand break at the site of the removed base with both 3'- and 5'-phosphates. The polypeptide is Formamidopyrimidine-DNA glycosylase (Salinispora tropica (strain ATCC BAA-916 / DSM 44818 / JCM 13857 / NBRC 105044 / CNB-440)).